Consider the following 210-residue polypeptide: Adenylate kinase isoenzyme 1 (210 aa).

Residue 30 to 35 participates in ATP binding; that stretch reads GSGKGT. The tract at residues 50 to 79 is NMP; it reads SSGDLLRDEVKSGSPRGAQLTAIMESGALV. Residues Ser-51, Arg-56, 77 to 79, 107 to 110, and Gln-114 contribute to the AMP site; these read ALV and GYPR. Residues 144 to 154 are LID; it reads HRAQTSGRADD. Residue Arg-145 coordinates ATP. AMP is bound by residues Arg-151 and Arg-162. Gly-190 is an ATP binding site.

It belongs to the adenylate kinase family. AK1 subfamily. As to quaternary structure, monomer.

It localises to the cytoplasm. The catalysed reaction is AMP + ATP = 2 ADP. Catalyzes the reversible transfer of the terminal phosphate group between ATP and AMP. Plays an important role in cellular energy homeostasis and in adenine nucleotide metabolism. The polypeptide is Adenylate kinase isoenzyme 1 (Caenorhabditis elegans).